The following is a 206-amino-acid chain: Erythropoietin (206 aa).

Residues 1-40 (MCEPAPPKPTQSAWHSFPECPALLLLLSLLLLPLGLPVLG) form the signal peptide. Disulfide bonds link C47/C201 and C69/C73. N-linked (GlcNAc...) asparagine glycosylation is present at N64. N78 and N123 each carry an N-linked (GlcNAc...) asparagine glycan.

The protein belongs to the EPO/TPO family. As to expression, produced by kidney or liver of adult mammals and by liver of fetal or neonatal mammals.

It is found in the secreted. Functionally, hormone involved in the regulation of erythrocyte proliferation and differentiation and the maintenance of a physiological level of circulating erythrocyte mass. Binds to EPOR leading to EPOR dimerization and JAK2 activation thereby activating specific downstream effectors, including STAT1 and STAT3. The polypeptide is Erythropoietin (EPO) (Canis lupus familiaris (Dog)).